Here is a 441-residue protein sequence, read N- to C-terminus: Bacteria-responsive protein 1 (441 aa).

A signal peptide spans 1–18; that stretch reads MWFFKVGALLFLAALVSA. Asn-20 is a glycosylation site (N-linked (GlcNAc...) asparagine). Positions 25 to 441 constitute a GH18 domain; it reads PKVLCYYDGQ…PILRAAKYRL (417 aa). Cys-29 and Cys-56 are joined by a disulfide. Residue Asn-225 is glycosylated (N-linked (GlcNAc...) asparagine).

This sequence belongs to the glycosyl hydrolase 18 family. IDGF subfamily. In terms of tissue distribution, salivary gland (at protein level).

It is found in the secreted. In terms of biological role, promotes recruitment of host neutrophils at the bite site. Induces expression of IL1B and IL6 in the skin of the host. Functionally, (Microbial infection) Enhances Zika virus replication and exacerbates disease pathogenesis in the host. The chain is Bacteria-responsive protein 1 from Aedes aegypti (Yellowfever mosquito).